A 308-amino-acid polypeptide reads, in one-letter code: Membrane protein insertase YidC 1 (308 aa).

The signal sequence occupies residues 1–22 (MKSIKRFALSAMGAAMLLVLTG). Residue C23 is the site of N-palmitoyl cysteine attachment. C23 is lipidated: S-diacylglycerol cysteine. A run of 5 helical transmembrane segments spans residues 60–80 (FGVA…PLGI), 135–155 (FGGV…AIYF), 168–188 (YLGI…GVLY), 211–225 (MIYM…FSLF), and 230–252 (VTLY…NYIV). The disordered stretch occupies residues 263–308 (ELAKNPSKASAFSTPSGRKDVTPEQPTAITSKKKHKNRNAGKQRSR). The span at 269 to 278 (SKASAFSTPS) shows a compositional bias: polar residues. A compositionally biased stretch (basic residues) spans 293–308 (SKKKHKNRNAGKQRSR).

Belongs to the OXA1/ALB3/YidC family. Type 2 subfamily.

The protein localises to the cell membrane. Its function is as follows. Required for the insertion and/or proper folding and/or complex formation of integral membrane proteins into the membrane. Involved in integration of membrane proteins that insert both dependently and independently of the Sec translocase complex, as well as at least some lipoproteins. This chain is Membrane protein insertase YidC 1, found in Streptococcus pneumoniae (strain ATCC BAA-255 / R6).